Consider the following 285-residue polypeptide: GPN-loop GTPase 3 (285 aa).

13 to 18 (GSGKST) is a binding site for GTP. The Gly-Pro-Asn (GPN)-loop; involved in dimer interface signature appears at 72 to 74 (GPN). 174–177 (TKMD) is a binding site for GTP. A disordered region spans residues 261-285 (KEPKENEEDKSENFDEFFQDRADEP). Residues 265–277 (ENEEDKSENFDEF) show a composition bias toward acidic residues.

The protein belongs to the GPN-loop GTPase family. As to quaternary structure, heterodimer with gpn1. Binds to RNA polymerase II (RNAPII).

Small GTPase required for proper localization of RNA polymerase II (RNAPII). May act at an RNAP assembly step prior to nuclear import. In Xenopus tropicalis (Western clawed frog), this protein is GPN-loop GTPase 3.